A 194-amino-acid chain; its full sequence is Crossover junction endodeoxyribonuclease RuvC (194 aa).

Active-site residues include aspartate 8, glutamate 72, and aspartate 144. Residues aspartate 8, glutamate 72, and aspartate 144 each coordinate Mg(2+).

Belongs to the RuvC family. As to quaternary structure, homodimer which binds Holliday junction (HJ) DNA. The HJ becomes 2-fold symmetrical on binding to RuvC with unstacked arms; it has a different conformation from HJ DNA in complex with RuvA. In the full resolvosome a probable DNA-RuvA(4)-RuvB(12)-RuvC(2) complex forms which resolves the HJ. It depends on Mg(2+) as a cofactor.

It localises to the cytoplasm. The enzyme catalyses Endonucleolytic cleavage at a junction such as a reciprocal single-stranded crossover between two homologous DNA duplexes (Holliday junction).. The RuvA-RuvB-RuvC complex processes Holliday junction (HJ) DNA during genetic recombination and DNA repair. Endonuclease that resolves HJ intermediates. Cleaves cruciform DNA by making single-stranded nicks across the HJ at symmetrical positions within the homologous arms, yielding a 5'-phosphate and a 3'-hydroxyl group; requires a central core of homology in the junction. The consensus cleavage sequence is 5'-(A/T)TT(C/G)-3'. Cleavage occurs on the 3'-side of the TT dinucleotide at the point of strand exchange. HJ branch migration catalyzed by RuvA-RuvB allows RuvC to scan DNA until it finds its consensus sequence, where it cleaves and resolves the cruciform DNA. The protein is Crossover junction endodeoxyribonuclease RuvC of Psychrobacter sp. (strain PRwf-1).